The following is a 471-amino-acid chain: ATP synthase subunit beta (471 aa).

Position 152–159 (152–159) interacts with ATP; it reads GGAGVGKT.

The protein belongs to the ATPase alpha/beta chains family. As to quaternary structure, F-type ATPases have 2 components, CF(1) - the catalytic core - and CF(0) - the membrane proton channel. CF(1) has five subunits: alpha(3), beta(3), gamma(1), delta(1), epsilon(1). CF(0) has three main subunits: a(1), b(2) and c(9-12). The alpha and beta chains form an alternating ring which encloses part of the gamma chain. CF(1) is attached to CF(0) by a central stalk formed by the gamma and epsilon chains, while a peripheral stalk is formed by the delta and b chains.

The protein resides in the cell membrane. The catalysed reaction is ATP + H2O + 4 H(+)(in) = ADP + phosphate + 5 H(+)(out). Produces ATP from ADP in the presence of a proton gradient across the membrane. The catalytic sites are hosted primarily by the beta subunits. The chain is ATP synthase subunit beta from Herpetosiphon aurantiacus (Herpetosiphon giganteus).